A 550-amino-acid polypeptide reads, in one-letter code: uncharacterized protein (550 aa).

A signal peptide spans 1–13 (MAGALFEPSFAAA). Residues 312-358 (DAQPDPHLSGDEPPSRPLTPETTLFEALTPDPEPDPPATHAPAELIT) are disordered.

This sequence to M.tuberculosis Rv3776.

This is an uncharacterized protein from Mycobacterium tuberculosis (strain CDC 1551 / Oshkosh).